We begin with the raw amino-acid sequence, 305 residues long: UDP-3-O-acyl-N-acetylglucosamine deacetylase (305 aa).

Residues H78, H237, and D241 each coordinate Zn(2+). H264 (proton donor) is an active-site residue.

This sequence belongs to the LpxC family. Zn(2+) serves as cofactor.

The enzyme catalyses a UDP-3-O-[(3R)-3-hydroxyacyl]-N-acetyl-alpha-D-glucosamine + H2O = a UDP-3-O-[(3R)-3-hydroxyacyl]-alpha-D-glucosamine + acetate. The protein operates within glycolipid biosynthesis; lipid IV(A) biosynthesis; lipid IV(A) from (3R)-3-hydroxytetradecanoyl-[acyl-carrier-protein] and UDP-N-acetyl-alpha-D-glucosamine: step 2/6. In terms of biological role, catalyzes the hydrolysis of UDP-3-O-myristoyl-N-acetylglucosamine to form UDP-3-O-myristoylglucosamine and acetate, the committed step in lipid A biosynthesis. This chain is UDP-3-O-acyl-N-acetylglucosamine deacetylase, found in Paraburkholderia xenovorans (strain LB400).